A 365-amino-acid chain; its full sequence is DNA replication and repair protein RecF (365 aa).

30 to 37 (GANGQGKT) contacts ATP.

It belongs to the RecF family.

Its subcellular location is the cytoplasm. Functionally, the RecF protein is involved in DNA metabolism; it is required for DNA replication and normal SOS inducibility. RecF binds preferentially to single-stranded, linear DNA. It also seems to bind ATP. The sequence is that of DNA replication and repair protein RecF from Geobacter sulfurreducens (strain ATCC 51573 / DSM 12127 / PCA).